Reading from the N-terminus, the 199-residue chain is NAD(P)H dehydrogenase (quinone) (199 aa).

The region spanning 4-190 (VLVLYYSTYG…EGARHQGELI (187 aa)) is the Flavodoxin-like domain. Residues 10–15 (STYGHV) and 78–80 (TRF) each bind FMN. Tyr12 is an NAD(+) binding site. Position 98 (Trp98) interacts with substrate. Residues 113–119 (STATQHG) and His134 each bind FMN.

This sequence belongs to the WrbA family. FMN serves as cofactor.

It catalyses the reaction a quinone + NADH + H(+) = a quinol + NAD(+). The enzyme catalyses a quinone + NADPH + H(+) = a quinol + NADP(+). The polypeptide is NAD(P)H dehydrogenase (quinone) (Cupriavidus metallidurans (strain ATCC 43123 / DSM 2839 / NBRC 102507 / CH34) (Ralstonia metallidurans)).